Here is a 221-residue protein sequence, read N- to C-terminus: GTP cyclohydrolase 1 (221 aa).

Residues cysteine 109, histidine 112, and cysteine 180 each coordinate Zn(2+).

It belongs to the GTP cyclohydrolase I family. As to quaternary structure, toroid-shaped homodecamer, composed of two pentamers of five dimers.

It catalyses the reaction GTP + H2O = 7,8-dihydroneopterin 3'-triphosphate + formate + H(+). Its pathway is cofactor biosynthesis; 7,8-dihydroneopterin triphosphate biosynthesis; 7,8-dihydroneopterin triphosphate from GTP: step 1/1. The chain is GTP cyclohydrolase 1 from Blochmanniella pennsylvanica (strain BPEN).